The primary structure comprises 429 residues: Cleavage stimulation factor subunit 50 (429 aa).

The hydrophobic stretch occupies residues 20–41; the sequence is LNALIVAHLRHHNLSQVASAVA. WD repeat units lie at residues 121 to 160, 174 to 213, 218 to 257, 264 to 303, 308 to 347, 351 to 392, and 396 to 429; these read EHKSVVRCARFSPDGMFFATGGADTSIKLFEVPKVKQMIS, DHAEPINDLDFHPRSTILISSAKDNCIKFFDFSKTTAKRA, QDTHNVRSISFHPSGEFLLAGTDHPIPHLYDVNTYQCFLP, GVSGAINQVRYSSTGSIYITASKDGAIRLFDGVSAKCVRS, HGKSEVTSAVFTKDQRFVLSSGKDSTVKLWEIGSGRMVKE, AKRV…KVAK, and NHNGAPRWIEHSPVESVFVTCGIDRSIRFWKESV.

Homodimer. Belongs to the CSTF complex. Forms a complex with cleavage and polyadenylation specificity factor (CPSF) subunits CSTF64, PABN3, CPSF30, FIPS5 and CPSF100.

It localises to the nucleus. Functionally, one of the multiple factors required for polyadenylation and 3'-end cleavage of pre-mRNAs. May be responsible for the interaction of CSTF with other factors to form a stable complex on the pre-mRNA. The protein is Cleavage stimulation factor subunit 50 of Arabidopsis thaliana (Mouse-ear cress).